The chain runs to 656 residues: Macrolide export ATP-binding/permease protein MacB (656 aa).

Residues 6 to 244 enclose the ABC transporter domain; it reads LEVSACYRSF…AAPKTEVIPA (239 aa). 42 to 49 contributes to the ATP binding site; it reads GASGSGKS. 4 helical membrane passes run 277–297, 531–551, 586–606, and 621–641; these read FLTM…VALG, LLIS…VMNI, LVCL…GVVF, and SIVA…FLPA.

Belongs to the ABC transporter superfamily. Macrolide exporter (TC 3.A.1.122) family. Homodimer. Part of the tripartite efflux system MacAB-TolC, which is composed of an inner membrane transporter, MacB, a periplasmic membrane fusion protein, MacA, and an outer membrane component, TolC. The complex forms a large protein conduit and can translocate molecules across both the inner and outer membranes. Interacts with MacA.

The protein localises to the cell inner membrane. Functionally, part of the tripartite efflux system MacAB-TolC. MacB is a non-canonical ABC transporter that contains transmembrane domains (TMD), which form a pore in the inner membrane, and an ATP-binding domain (NBD), which is responsible for energy generation. Confers resistance against macrolides. This chain is Macrolide export ATP-binding/permease protein MacB, found in Shewanella sp. (strain ANA-3).